Reading from the N-terminus, the 662-residue chain is ATP-dependent RNA helicase DDX3X (662 aa).

Residue S2 is modified to N-acetylserine. Residues 2–139 (SHVAVENALG…KSDEDDWSKP (138 aa)) form a required for TBK1 and IKBKE-dependent IFNB1 activation region. Residues 12-21 (LDQQFAGLDL) carry the Nuclear export signal motif. Residues 19–144 (LDLNSSDNQS…DWSKPLPPSE (126 aa)) are disordered. Over residues 21–34 (LNSSDNQSGGSTAS) the composition is skewed to polar residues. The segment at 38-44 (YIPPHLR) is interaction with EIF4E. Residues 44-68 (RNREATKGFYDKDSSGWSSSKDKDA) show a composition bias toward basic and acidic residues. At K55 the chain carries N6-acetyllysine. A phosphoserine mark is found at S82 and S90. The segment covering 94-130 (GRFDDRGRGDYDGIGGRGDRSGFGKFERGGNSRWCDK) has biased composition (basic and acidic residues). Positions 100 to 110 (GRGDYDGIGGR) are interaction with IKBKE. Positions 100 to 662 (GRGDYDGIGG…NSQGVDWWGN (563 aa)) are interaction with GSK3B. Omega-N-methylarginine is present on R101. Y104 is modified (phosphotyrosine). R110 carries the post-translational modification Omega-N-methylarginine. At K118 the chain carries N6-acetyllysine. Residue S131 is modified to Phosphoserine. An interaction with CHUK region spans residues 139–172 (PLPPSERLEQELFSGGNTGINFEKYDDIPVEATG). A Q motif motif is present at residues 180 to 208 (ESFSDVEMGEIIMGNIELTRYTRPTPVQK). At S183 the chain carries Phosphoserine. 200 to 207 (YTRPTPVQ) contacts ATP. Residues 211–403 (IPIIKEKRDL…RDFLDEYIFL (193 aa)) enclose the Helicase ATP-binding domain. K215 is covalently cross-linked (Glycyl lysine isopeptide (Lys-Gly) (interchain with G-Cter in SUMO2)). Residue 224 to 231 (AQTGSGKT) participates in ATP binding. The involved in stimulation of ATPase activity by DNA and RNA, nucleic acid binding and unwinding stretch occupies residues 250–259 (ALRAMKENGR). The DEAD box signature appears at 347–350 (DEAD). The Helicase C-terminal domain maps to 414-575 (NITQKVVWVE…EVPSWLENMA (162 aa)). S456 is subject to Phosphoserine. The interaction with NXF1 stretch occupies residues 536-661 (GNLGLATSFF…YNSQGVDWWG (126 aa)). Residue R592 is modified to Omega-N-methylarginine. Phosphoserine is present on residues S594, S605, and S612. Positions 601–633 (DYRQSSGASSSSFSSSRASSSRSGGGGHGGSRG) are disordered. Positions 604–622 (QSSGASSSSFSSSRASSSR) are enriched in low complexity. 2 positions are modified to omega-N-methylarginine: R617 and R632. The span at 623–633 (SGGGGHGGSRG) shows a compositional bias: gly residues.

This sequence belongs to the DEAD box helicase family. DDX3/DED1 subfamily. Homodimer; can bind RNA as a monomer and as a dimer/oligomer. Interacts with TDRD3. When phosphorylated, interacts with IRF3; the interaction facilitates the phosphorylation and activation of IRF3 by IKBKE. Directly interacts with XPO1/CRM1. The interaction with XPO1/CMR1 is dependent on the DDX3X nuclear export signal motif and XPO1 interaction with GTPase RAN in its active GTP-bound form. Weakly interacts with TBKBP1/SINTBAD. Directly interacts with TRAF3; this interaction stimulates TRAF3 'Lys-63' ubiquitination. Interacts with CSNK1E in a Wnt-dependent manner; this interaction greatly enhances CSNK1E affinity for ATP, stimulates its kinase activity and promotes CSNK1E-mediated DVL2 phosphorylation. In the presence of RNA, the interaction is decreased. Also interacts with CSNK1D and stimulates its kinase activity. Interacts with TRPV4; this interaction is decreased when the TRPV4 channel is activated, leading to DDX3X relocalization to the nucleus. Interacts with MAP3K14/NIK. Directly interacts with CHUK/IKKA after physiological activation of the TLR7 and TLR8 pathways; this interaction enhances CHUK autophosphorylation. May associate with EIF4F complex, composed of at least EIF4A, EIF4E and EIF4G1/EIF4G3. Directly interacts with EIF4E in an RNA-independent manner; this interaction enhances EIF4E cap-binding ability. Directly interacts with EIF4G1 in an RNA-independent manner. DDX3X competes with EIF4G1 for interaction with EIF4E. Interacts with EIF4A1 and EIF2S1 in an RNA-independent manner. Associates with the eukaryotic translation initiation factor 3 (eIF-3) complex, including with EIF3B and EIF3C subunits. Directly interacts with IKBKE/IKKE; this interaction stimulates IKBKE activating autophosphorylation and is induced upon viral infection. Interacts with TBK1. Interacts with SP1; this interaction potentiates SP1-induced CDKN1A/WAF1/CIP1 transcription. Interacts with GSK3A and GSK3B. Interacts with several death receptors, inclusing FAS, TNFRSF10A and TNFRSF10B. Recruited to TNFRSF10B in the absence of receptor stimulation. When TNFRSF10B is stimulated, further recruited to the receptor and cleaved by caspases. A large proteolytic fragment remains associated with TNFRSF10B. Interacts (via C-terminus) with NXF1/TAP; this interaction may be partly involved in DDX3X nuclear export and in NXF1 localization to stress granules. Identified in an mRNP complex, composed of at least DHX9, DDX3X, ELAVL1, HNRNPU, IGF2BP1/2, ILF3, PABPC1, PCBP2, PTBP2, STAU1, STAU2, SYNCRIP and YBX1. The interaction with IGF2BP1/2 is RNA-dependent. Directly interacts with PABPC1/PABP1 in an RNA-independent manner. This interaction increases in stressed cells and decreases during cell recovery. Interacts (via C-terminus) with MAVS/IPS-1; this interaction potentiates MAVS-mediated IFNB induction. Interacts with ERCC6/CBS. Interacts with DHX33 in an RNA-independent manner. Interacts with DDX5 in the cytoplasm; this interaction may be more efficient when both proteins are unphosphorylated. Interacts with RIGI. Interacts with IFIH1/MDA5. Interacts with NCAPH; this interaction may be important for the NCAPH localization at condensing chromosomes during mitosis. Interacts with NLRP3 (via NACHT domain) under inflammasome-activating conditions. Interacts with CAPRIN1. Interacts with HNF4A and NR0B2/SHP in an RNA-independent manner; this interaction disrupts the interaction between HNF4 and NR0B2 that forms inactive heterodimers and enhances the formation of active HNF4 homodimers. Interacts with CREBBP/CBP. Interacts with EP300/p300. Interacts with gamma-tubulin. Interacts with phosphorylated TP53. Directly interacts with RELA/p65; this interaction may trap RELA in the cytoplasm, impairing nuclear relocalization upon TNF activating signals. Post-translationally, phosphorylated by TBK1; the phosphorylation is required for the synergistic induction of IFNB mediated by TBK1 and DDX3X. Phosphorylated by IKBKE. Also phosphorylated by CSNK1E; this phosphorylation may inhibit RNA-stimulated ATPase activity. Upon stimulation of death receptors, including TNFRSF10B, recruited to receptors and cleaved by caspases. Proteolytic fragments remain associated with the receptors. This cleavage presumably inactivates DDX3X anti-apoptotic function. In terms of processing, ubiquitinated by RNF39 via 'Lys-48'-linked ubiquitination; leading to proteasomal degradation. As to expression, expressed in ovary, including in germinal vesicle immature and metaphase II (MII) stage oocytes (at protein level). In the brain, expressed in the granule cells of the cerebellum and dentate gyrus, the pyramidal cells of the hippocampus, the ependymal cells lining the ventricles, choroid plexi and olfactory bulb. Also accumulates in the thalamic nuclei, the dorsal region of the colliculi and the pontine nucleus.

Its subcellular location is the cell membrane. The protein resides in the nucleus. It localises to the cytoplasm. It is found in the stress granule. The protein localises to the inflammasome. Its subcellular location is the cell projection. The protein resides in the lamellipodium. It carries out the reaction ATP + H2O = ADP + phosphate + H(+). Functionally, multifunctional ATP-dependent RNA helicase. The ATPase activity can be stimulated by various ribo-and deoxynucleic acids indicative for a relaxed substrate specificity. In vitro can unwind partially double-stranded DNA with a preference for 5'-single-stranded DNA overhangs. Binds RNA G-quadruplex (rG4s) structures, including those located in the 5'-UTR of NRAS mRNA. Involved in many cellular processes, which do not necessarily require its ATPase/helicase catalytic activities. Involved in transcription regulation. Positively regulates CDKN1A/WAF1/CIP1 transcription in an SP1-dependent manner, hence inhibits cell growth. This function requires its ATPase, but not helicase activity. CDKN1A up-regulation may be cell-type specific. Binds CDH1/E-cadherin promoter and represses its transcription. Potentiates HNF4A-mediated MTTP transcriptional activation; this function requires ATPase, but not helicase activity. Facilitates HNF4A acetylation, possibly catalyzed by CREBBP/EP300, thereby increasing the DNA-binding affinity of HNF4 to its response element. In addition, disrupts the interaction between HNF4 and SHP that forms inactive heterodimers and enhances the formation of active HNF4 homodimers. By promoting HNF4A-induced MTTP expression, may play a role in lipid homeostasis. May positively regulate TP53 transcription. Associates with mRNPs, predominantly with spliced mRNAs carrying an exon junction complex (EJC). Involved in the regulation of translation initiation. Not involved in the general process of translation, but promotes efficient translation of selected complex mRNAs, containing highly structured 5'-untranslated regions (UTR). This function depends on helicase activity. Might facilitate translation by resolving secondary structures of 5'-UTRs during ribosome scanning. Alternatively, may act prior to 43S ribosomal scanning and promote 43S pre-initiation complex entry to mRNAs exhibiting specific RNA motifs, by performing local remodeling of transcript structures located close to the cap moiety. Independently of its ATPase activity, promotes the assembly of functional 80S ribosomes and disassembles from ribosomes prior to the translation elongation process. Positively regulates the translation of cyclin E1/CCNE1 mRNA and consequently promotes G1/S-phase transition during the cell cycle. May activate TP53 translation. Required for endoplasmic reticulum stress-induced ATF4 mRNA translation. Independently of its ATPase/helicase activity, enhances IRES-mediated translation; this activity requires interaction with EIF4E. Independently of its ATPase/helicase activity, has also been shown specifically repress cap-dependent translation, possibly by acting on translation initiation factor EIF4E. Involved in innate immunity, acting as a viral RNA sensor. Binds viral RNAs and promotes the production of type I interferon (IFN-alpha and IFN-beta). Potentiate MAVS/RIGI-mediated induction of IFNB in early stages of infection. Enhances IFNB1 expression via IRF3/IRF7 pathway and participates in NFKB activation in the presence of MAVS and TBK1. Involved in TBK1 and IKBKE-dependent IRF3 activation leading to IFNB induction, acts as a scaffolding adapter that links IKBKE and IRF3 and coordinates their activation. Involved in the TLR7/TLR8 signaling pathway leading to type I interferon induction, including IFNA4 production. In this context, acts as an upstream regulator of IRF7 activation by MAP3K14/NIK and CHUK/IKKA. Stimulates CHUK autophosphorylation and activation following physiological activation of the TLR7 and TLR8 pathways, leading to MAP3K14/CHUK-mediated activatory phosphorylation of IRF7. Also stimulates MAP3K14/CHUK-dependent NF-kappa-B signaling. Negatively regulates TNF-induced IL6 and IL8 expression, via the NF-kappa-B pathway. May act by interacting with RELA/p65 and trapping it in the cytoplasm. May also bind IFNB promoter; the function is independent of IRF3. Involved in both stress and inflammatory responses. Independently of its ATPase/helicase activity, required for efficient stress granule assembly through its interaction with EIF4E, hence promotes survival in stressed cells. Independently of its helicase activity, regulates NLRP3 inflammasome assembly through interaction with NLRP3 and hence promotes cell death by pyroptosis during inflammation. This function is independent of helicase activity. Therefore DDX3X availability may be used to interpret stress signals and choose between pro-survival stress granules and pyroptotic NLRP3 inflammasomes and serve as a live-or-die checkpoint in stressed cells. In association with GSK3A/B, negatively regulates extrinsic apoptotic signaling pathway via death domain receptors, including TNFRSF10B, slowing down the rate of CASP3 activation following death receptor stimulation. Cleavage by caspases may inactivate DDX3X and relieve the inhibition. Independently of its ATPase/helicase activity, allosteric activator of CSNK1E. Stimulates CSNK1E-mediated phosphorylation of DVL2, thereby involved in the positive regulation of Wnt/beta-catenin signaling pathway. Also activates CSNK1A1 and CSNK1D in vitro, but it is uncertain if these targets are physiologically relevant. ATPase and casein kinase-activating functions are mutually exclusive. May be involved in mitotic chromosome segregation. The sequence is that of ATP-dependent RNA helicase DDX3X (Ddx3x) from Mus musculus (Mouse).